The sequence spans 383 residues: Pentatricopeptide repeat-containing protein 2, mitochondrial (383 aa).

A PPR repeat occupies 161–195; it reads TSFNILMDMLFIKGKYKSALEVLIEMKNQNVKFTT. Phosphoserine is present on serine 377.

Belongs to the PTCD2 family.

The protein resides in the mitochondrion. In terms of biological role, involved in mitochondrial RNA maturation and mitochondrial respiratory chain function. This is Pentatricopeptide repeat-containing protein 2, mitochondrial (PTCD2) from Pongo abelii (Sumatran orangutan).